A 330-amino-acid chain; its full sequence is Spondin-2 (330 aa).

A signal peptide spans 1–25 (MENVSFSLDRTLWVFLLAMLGSTAG). One can recognise a Spondin domain in the interval 30-220 (GESVCTARPL…EITASSPSHP (191 aa)). A disulfide bridge connects residues cysteine 34 and cysteine 170. A divalent metal cation is bound at residue glutamate 140. Positions 159, 187, and 191 each coordinate Ca(2+). Residues 276 to 330 (DCEVSLWSSWGLCGGPCGKLGAKSRTRYVRVQPANNGTPCPELEEEAECAPDNCV) enclose the TSP type-1 domain. A C-linked (Man) tryptophan glycan is attached at tryptophan 282.

In terms of assembly, monomer. Interacts with integrin. As to expression, abundantly expressed in the developing hippocampus.

The protein resides in the secreted. It is found in the extracellular space. It localises to the extracellular matrix. In terms of biological role, cell adhesion protein that promotes adhesion and outgrowth of hippocampal embryonic neurons. Binds directly to bacteria and their components and functions as an opsonin for macrophage phagocytosis of bacteria. Essential in the initiation of the innate immune response and represents a unique pattern-recognition molecule in the ECM for microbial pathogens. This is Spondin-2 (Spon2) from Rattus norvegicus (Rat).